Reading from the N-terminus, the 118-residue chain is Ribonuclease P protein component (118 aa).

Belongs to the RnpA family. Consists of a catalytic RNA component (M1 or rnpB) and a protein subunit.

The enzyme catalyses Endonucleolytic cleavage of RNA, removing 5'-extranucleotides from tRNA precursor.. Functionally, RNaseP catalyzes the removal of the 5'-leader sequence from pre-tRNA to produce the mature 5'-terminus. It can also cleave other RNA substrates such as 4.5S RNA. The protein component plays an auxiliary but essential role in vivo by binding to the 5'-leader sequence and broadening the substrate specificity of the ribozyme. This chain is Ribonuclease P protein component, found in Bifidobacterium animalis subsp. lactis (strain AD011).